A 592-amino-acid chain; its full sequence is ATP-binding protein Uup (592 aa).

2 consecutive ABC transporter domains span residues 1 to 221 (MPLI…RIEK) and 289 to 516 (FKLK…KSNI). Residues 36–43 (GKNGAGKS) and 321–328 (GNNGSGKS) contribute to the ATP site. Residues 516–550 (ISFLKTKQNQVKKELKKVLNEIEKIENSIKTLKIQ) are a coiled coil. The interval 518–592 (FLKTKQNQVK…IYWENLEKKL (75 aa)) is C-terminal domain (CTD), binds DNA.

It belongs to the ABC transporter superfamily. ABCF family. Uup subfamily.

It is found in the cytoplasm. It carries out the reaction ATP + H2O = ADP + phosphate + H(+). Probably plays a role in ribosome assembly or function. May be involved in resolution of branched DNA intermediates that result from template switching in postreplication gaps. Binds DNA and has ATPase activity. The chain is ATP-binding protein Uup from Buchnera aphidicola subsp. Schizaphis graminum (strain Sg).